We begin with the raw amino-acid sequence, 113 residues long: MSEVNVPLSFSDAAASRVKALIAEEENPALKLRVYITGGGCSGFQYGFTFDENVNDGDTTIENSGVTLVVDPMSLQYLIGGIVDYTEGLEGARFFVNNPNATTTCGCGASFSV.

The iron-sulfur cluster site is built by Cys-41, Cys-105, and Cys-107.

This sequence belongs to the HesB/IscA family. As to quaternary structure, homodimer. It depends on iron-sulfur cluster as a cofactor.

In terms of biological role, required for insertion of 4Fe-4S clusters for at least IspG. In Vibrio parahaemolyticus serotype O3:K6 (strain RIMD 2210633), this protein is Iron-sulfur cluster insertion protein ErpA.